A 468-amino-acid chain; its full sequence is ATP synthase subunit beta (468 aa).

155 to 162 (GGAGVGKT) contacts ATP.

It belongs to the ATPase alpha/beta chains family. As to quaternary structure, F-type ATPases have 2 components, CF(1) - the catalytic core - and CF(0) - the membrane proton channel. CF(1) has five subunits: alpha(3), beta(3), gamma(1), delta(1), epsilon(1). CF(0) has three main subunits: a(1), b(2) and c(9-12). The alpha and beta chains form an alternating ring which encloses part of the gamma chain. CF(1) is attached to CF(0) by a central stalk formed by the gamma and epsilon chains, while a peripheral stalk is formed by the delta and b chains.

Its subcellular location is the cell membrane. The enzyme catalyses ATP + H2O + 4 H(+)(in) = ADP + phosphate + 5 H(+)(out). In terms of biological role, produces ATP from ADP in the presence of a proton gradient across the membrane. The catalytic sites are hosted primarily by the beta subunits. This Streptococcus equi subsp. zooepidemicus (strain H70) protein is ATP synthase subunit beta.